The primary structure comprises 172 residues: Ribosome maturation factor RimM (172 aa).

Residues 97–170 (ENEFYFHEII…KITIEVMEGL (74 aa)) enclose the PRC barrel domain.

The protein belongs to the RimM family. In terms of assembly, binds ribosomal protein uS19.

It localises to the cytoplasm. In terms of biological role, an accessory protein needed during the final step in the assembly of 30S ribosomal subunit, possibly for assembly of the head region. Essential for efficient processing of 16S rRNA. May be needed both before and after RbfA during the maturation of 16S rRNA. It has affinity for free ribosomal 30S subunits but not for 70S ribosomes. The chain is Ribosome maturation factor RimM from Listeria monocytogenes serovar 1/2a (strain ATCC BAA-679 / EGD-e).